A 401-amino-acid chain; its full sequence is Coenzyme A biosynthesis bifunctional protein CoaBC (401 aa).

The interval 1-190 is phosphopantothenoylcysteine decarboxylase; that stretch reads MQTLAGKKIL…FQPKPLQDKS (190 aa). Residue Cys-159 is the Proton donor of the active site. The phosphopantothenate--cysteine ligase stretch occupies residues 191–401; it reads ILITAGPTRE…LKQIQTLMGH (211 aa). Residues Asp-279, Lys-289, 307–310, Phe-326, Lys-340, and Lys-344 contribute to the CTP site; that span reads PDIV.

This sequence in the N-terminal section; belongs to the HFCD (homo-oligomeric flavin containing Cys decarboxylase) superfamily. In the C-terminal section; belongs to the PPC synthetase family. It depends on Mg(2+) as a cofactor. Requires FMN as cofactor.

The enzyme catalyses N-[(R)-4-phosphopantothenoyl]-L-cysteine + H(+) = (R)-4'-phosphopantetheine + CO2. It carries out the reaction (R)-4'-phosphopantothenate + L-cysteine + CTP = N-[(R)-4-phosphopantothenoyl]-L-cysteine + CMP + diphosphate + H(+). It participates in cofactor biosynthesis; coenzyme A biosynthesis; CoA from (R)-pantothenate: step 2/5. Its pathway is cofactor biosynthesis; coenzyme A biosynthesis; CoA from (R)-pantothenate: step 3/5. Catalyzes two sequential steps in the biosynthesis of coenzyme A. In the first step cysteine is conjugated to 4'-phosphopantothenate to form 4-phosphopantothenoylcysteine. In the second step the latter compound is decarboxylated to form 4'-phosphopantotheine. The chain is Coenzyme A biosynthesis bifunctional protein CoaBC from Vibrio vulnificus (strain CMCP6).